Consider the following 229-residue polypeptide: Ribosome maturation factor RimM (229 aa).

Residues 1–21 (MAGHDSGNAKRGRSPSFGVFV) are disordered. Residues 148–229 (ADEFYWVDLI…RVVVDWEADY (82 aa)) enclose the PRC barrel domain.

This sequence belongs to the RimM family. Binds ribosomal protein uS19.

It localises to the cytoplasm. Its function is as follows. An accessory protein needed during the final step in the assembly of 30S ribosomal subunit, possibly for assembly of the head region. Essential for efficient processing of 16S rRNA. May be needed both before and after RbfA during the maturation of 16S rRNA. It has affinity for free ribosomal 30S subunits but not for 70S ribosomes. The sequence is that of Ribosome maturation factor RimM from Burkholderia mallei (strain NCTC 10247).